Consider the following 153-residue polypeptide: 17.6 kDa class I heat shock protein (153 aa).

The sHSP domain maps to 38–153; sequence ETAAIVNARI…PMVKAIDISG (116 aa).

The protein belongs to the small heat shock protein (HSP20) family. Forms oligomeric structures.

The protein localises to the cytoplasm. This chain is 17.6 kDa class I heat shock protein (HSP17.6), found in Helianthus annuus (Common sunflower).